Here is a 259-residue protein sequence, read N- to C-terminus: O-antigen export system permease protein RfbA (259 aa).

6 helical membrane passes run 33–53 (FGYL…YFIF), 73–95 (FPWQ…NAQI), 111–131 (VMME…FLFV), 142–162 (WGIP…SIIF), 176–196 (VSLG…SDMI), and 228–248 (EYIS…LAIF). The 219-residue stretch at 33 to 251 (FGYLWSIANP…IVGLAIFNKL (219 aa)) folds into the ABC transmembrane type-2 domain.

It belongs to the ABC-2 integral membrane protein family.

It localises to the cell inner membrane. Functionally, may form an ATP-driven O-antigen export apparatus, in association with RfbB. This chain is O-antigen export system permease protein RfbA (rfbA), found in Klebsiella pneumoniae.